Here is a 118-residue protein sequence, read N- to C-terminus: REPTOR-binding partner (118 aa).

Residues 1–20 (MADMEIQSNKMSITEETQVQ) show a composition bias toward polar residues. Residues 1–53 (MADMEIQSNKMSITEETQVQTRKECGKRGRKPGRKTSTEKLDMKAKLERSRQS) form a disordered region. The segment covering 36–53 (TSTEKLDMKAKLERSRQS) has biased composition (basic and acidic residues). A basic motif region spans residues 40 to 77 (KLDMKAKLERSRQSARECRARKKLRYQYLEELVADREK). A bZIP domain is found at 40–90 (KLDMKAKLERSRQSARECRARKKLRYQYLEELVADREKAVVALRTELERLI). The segment at 82-89 (LRTELERL) is leucine-zipper.

It belongs to the bZIP family. ATF subfamily. As to quaternary structure, homodimer. Interacts (via C-terminus) with REPTOR (via C-terminus).

Its subcellular location is the nucleus. The protein resides in the chromosome. Functionally, transcriptional regulator that acts in the TORC1 signaling pathway to regulate energy homeostasis and promote survival during nutrient deprivation. Interacts with REPTOR to form a transcriptional activator complex that functions downstream of TORC1 to up-regulate the expression of most target genes induced by TORC1 inhibition. In the complex, acts to enhance the binding of the transcriptional activator REPTOR to the regulatory sequences of target genes. Under normal conditions TORC1 is active, inhibiting the formation of the REPTOR/REPTOR-BP complex by phosphorylating REPTOR and mediates its cytoplasmic retention by forming a docking site for 14-3-3 proteins. Upon TORC1 inhibition resulting from nutrient stress, REPTOR is recruited into the nucleus where it interacts with REPTOR-BP and together they maintain organismal metabolism by activating the expression of target stress response genes including those involved in glycogenesis and triglyceride biosynthesis. The complex also appears to negatively regulate some aspects of TORC1-dependent larval growth. This is REPTOR-binding partner from Drosophila melanogaster (Fruit fly).